Here is a 553-residue protein sequence, read N- to C-terminus: 3-amino-2-hydroxy-4-methoxybenzoate diazotase (553 aa).

A compositionally biased stretch (low complexity) spans 157–167; sequence ALPAAGATGPA. The tract at residues 157–178 is disordered; it reads ALPAAGATGPAREGDAPPPAPV.

It belongs to the ATP-dependent AMP-binding enzyme family.

It catalyses the reaction 3-amino-2-hydroxy-4-methoxybenzoate + nitrite + ATP = cremeomycin + AMP + diphosphate + H2O. The protein operates within antibiotic biosynthesis. In terms of biological role, part of a gene cluster involved in the biosynthesis of cremeomycin, a light-sensitive o-diazoquinone with antibacterial and antiproliferative effects. Catalyzes the last step of cremeomycin biosynthesis, the diazotization of 3-amino-2-hydroxy-4-methoxybenzoate (3,2,4-AHMBA) with nitrite to generate cremeomycin. The sequence is that of 3-amino-2-hydroxy-4-methoxybenzoate diazotase from Streptomyces cremeus.